Reading from the N-terminus, the 235-residue chain is Fibrillarin-like rRNA/tRNA 2'-O-methyltransferase (235 aa).

Residues 91 to 92 (TT), 110 to 111 (EF), 137 to 138 (DA), and 157 to 160 (DVAQ) each bind S-adenosyl-L-methionine.

The protein belongs to the methyltransferase superfamily. Fibrillarin family. Interacts with nop5. Component of box C/D small ribonucleoprotein (sRNP) particles that contain rpl7ae, FlpA and nop5, plus a guide RNA.

In terms of biological role, involved in pre-rRNA and tRNA processing. Utilizes the methyl donor S-adenosyl-L-methionine to catalyze the site-specific 2'-hydroxyl methylation of ribose moieties in rRNA and tRNA. Site specificity is provided by a guide RNA that base pairs with the substrate. Methylation occurs at a characteristic distance from the sequence involved in base pairing with the guide RNA. The sequence is that of Fibrillarin-like rRNA/tRNA 2'-O-methyltransferase from Pyrobaculum aerophilum (strain ATCC 51768 / DSM 7523 / JCM 9630 / CIP 104966 / NBRC 100827 / IM2).